A 240-amino-acid chain; its full sequence is 6-carboxyhexanoate--CoA ligase (240 aa).

It belongs to the BioW family. Homodimer. Mg(2+) is required as a cofactor.

It carries out the reaction heptanedioate + ATP + CoA = 6-carboxyhexanoyl-CoA + AMP + diphosphate. It functions in the pathway metabolic intermediate metabolism; pimeloyl-CoA biosynthesis; pimeloyl-CoA from pimelate: step 1/1. Catalyzes the transformation of pimelate into pimeloyl-CoA with concomitant hydrolysis of ATP to AMP. This chain is 6-carboxyhexanoate--CoA ligase, found in Aquifex aeolicus (strain VF5).